The sequence spans 73 residues: Ubiquitin-like protein 5 (73 aa).

The Ubiquitin-like domain occupies 1-73 (MIEITCNDRL…DGMNLELYYQ (73 aa)).

It localises to the cytoplasm. The polypeptide is Ubiquitin-like protein 5 (ubl) (Drosophila melanogaster (Fruit fly)).